Reading from the N-terminus, the 481-residue chain is Aspartyl/glutamyl-tRNA(Asn/Gln) amidotransferase subunit B (481 aa).

The protein belongs to the GatB/GatE family. GatB subfamily. As to quaternary structure, heterotrimer of A, B and C subunits.

It catalyses the reaction L-glutamyl-tRNA(Gln) + L-glutamine + ATP + H2O = L-glutaminyl-tRNA(Gln) + L-glutamate + ADP + phosphate + H(+). The enzyme catalyses L-aspartyl-tRNA(Asn) + L-glutamine + ATP + H2O = L-asparaginyl-tRNA(Asn) + L-glutamate + ADP + phosphate + 2 H(+). Allows the formation of correctly charged Asn-tRNA(Asn) or Gln-tRNA(Gln) through the transamidation of misacylated Asp-tRNA(Asn) or Glu-tRNA(Gln) in organisms which lack either or both of asparaginyl-tRNA or glutaminyl-tRNA synthetases. The reaction takes place in the presence of glutamine and ATP through an activated phospho-Asp-tRNA(Asn) or phospho-Glu-tRNA(Gln). The polypeptide is Aspartyl/glutamyl-tRNA(Asn/Gln) amidotransferase subunit B (Pseudomonas syringae pv. tomato (strain ATCC BAA-871 / DC3000)).